The chain runs to 1736 residues: Hybrid signal transduction histidine kinase I (1736 aa).

A compositionally biased stretch (low complexity) spans 143 to 161; the sequence is HNINNNQNNQNSVNINSSN. A disordered region spans residues 143–171; the sequence is HNINNNQNNQNSVNINSSNKGQYNRPEPS. The PAC domain maps to 234 to 286; that stretch reads FEYPLRINRKNDNLVRYIQLKGEIIKKDDKVFKVLGVCHDFSEIQEAKDKLEE. Residues 287–358 form the PAS domain; that stretch reads ESKFVEALIG…QINLEKSGTP (72 aa). The disordered stretch occupies residues 378–469; it reads TSNQQQSSLS…NTTNGIGGAT (92 aa). Low complexity predominate over residues 379 to 389; it reads SNQQQSSLSKS. Over residues 392–412 the composition is skewed to polar residues; sequence PRSQSNCSNGNKSQNRLSKNY. The span at 413–469 shows a compositional bias: low complexity; the sequence is STTTTTTNNNNNNNNNNNNNNNNNNNNNSISQQQQTQVSTQQTQQQQNTTNGIGGAT. Positions 556–908 constitute a Histidine kinase domain; it reads NISHELLSPM…TFHFILSIKS (353 aa). His559 is subject to Phosphohistidine; by autocatalysis. 7 disordered regions span residues 711–821, 952–971, 1080–1124, 1157–1258, 1277–1301, 1330–1393, and 1419–1520; these read NSKT…KREK, TKKVKKDSNDNGNNDSTNYG, NGNN…KQHS, PPKS…ILSP, SLTPNSSNSTSTNVTQSSSNIINNG, ASSP…NLSS, and SNNL…PPIL. Acidic residues-rich tracts occupy residues 725-735 and 758-789; these read SIDGDYDDQDN and ELDEKDNSDDDDENDDENDETDENDDDTDDDT. 3 stretches are compositionally biased toward low complexity: residues 790-807, 961-971, and 1080-1096; these read SSNTSRNNISNNLLFHNN, DNGNNDSTNYG, and NGNNNSGISLNNSNNNI. Polar residues predominate over residues 1097 to 1117; that stretch reads QTPNGLNNSRGSSLISTPSTK. 2 stretches are compositionally biased toward low complexity: residues 1186–1195 and 1202–1258; these read SSPPINSSSS and TNGS…ILSP. Positions 1330–1339 are enriched in polar residues; it reads ASSPKQSQRG. 4 stretches are compositionally biased toward low complexity: residues 1340–1376, 1425–1475, 1482–1492, and 1506–1520; these read YSPKQQYSPKQYSPKQQYSPKQYSPKQQQQQQQQQQQ, NNNN…STPE, SPRSNNNNNCS, and SSTITTPQFQSPPIL. The region spanning 1551–1674 is the Response regulatory domain; the sequence is KVLVAEDNTM…LLYEVINTQI (124 aa). Asp1605 carries the post-translational modification 4-aspartylphosphate. The segment covering 1695 to 1722 has biased composition (low complexity); that stretch reads NNNNNNTNNNNNNNNSSNPVNNNNSNSI. Residues 1695–1736 form a disordered region; sequence NNNNNNTNNNNNNNNSSNPVNNNNSNSIDATQQELNNEKIRI.

In terms of processing, activation probably requires transfer of a phosphate group between a histidine in the kinase core (transmitter) domain and an aspartate of the receiver domain.

The catalysed reaction is ATP + protein L-histidine = ADP + protein N-phospho-L-histidine.. In terms of biological role, acts as a receptor histidine kinase for a signal transduction pathway. This protein undergoes an ATP-dependent autophosphorylation at a conserved histidine residue in the kinase core, and a phosphoryl group is then transferred to a conserved aspartate residue in the receiver domain. This Dictyostelium discoideum (Social amoeba) protein is Hybrid signal transduction histidine kinase I (dhkI-1).